Consider the following 145-residue polypeptide: 3-dehydroquinate dehydratase (145 aa).

Tyr-22 acts as the Proton acceptor in catalysis. Substrate-binding residues include Asn-71, His-77, and Asp-84. Residue His-97 is the Proton donor of the active site. Substrate-binding positions include 98–99 (LS) and Arg-108.

This sequence belongs to the type-II 3-dehydroquinase family. In terms of assembly, homododecamer.

It carries out the reaction 3-dehydroquinate = 3-dehydroshikimate + H2O. Its pathway is metabolic intermediate biosynthesis; chorismate biosynthesis; chorismate from D-erythrose 4-phosphate and phosphoenolpyruvate: step 3/7. Catalyzes a trans-dehydration via an enolate intermediate. The polypeptide is 3-dehydroquinate dehydratase (Francisella philomiragia subsp. philomiragia (strain ATCC 25017 / CCUG 19701 / FSC 153 / O#319-036)).